An 88-amino-acid polypeptide reads, in one-letter code: ATP synthase subunit 9, mitochondrial (88 aa).

The next 2 helical transmembrane spans lie at 30 to 50 (IGLTGAGAGVGIVFAAFILAV) and 66 to 86 (LGFALSEAVGLLALMMSFLIL).

The protein belongs to the ATPase C chain family. In terms of assembly, F-type ATPases have 2 components, CF(1) - the catalytic core - and CF(0) - the membrane proton channel. CF(1) has five subunits: alpha(3), beta(3), gamma(1), delta(1), epsilon(1). CF(0) has three main subunits: a, b and c.

Its subcellular location is the mitochondrion membrane. Functionally, mitochondrial membrane ATP synthase (F(1)F(0) ATP synthase or Complex V) produces ATP from ADP in the presence of a proton gradient across the membrane which is generated by electron transport complexes of the respiratory chain. F-type ATPases consist of two structural domains, F(1) - containing the extramembraneous catalytic core and F(0) - containing the membrane proton channel, linked together by a central stalk and a peripheral stalk. During catalysis, ATP synthesis in the catalytic domain of F(1) is coupled via a rotary mechanism of the central stalk subunits to proton translocation. Part of the complex F(0) domain. A homomeric c-ring of probably 10 subunits is part of the complex rotary element. This chain is ATP synthase subunit 9, mitochondrial (atp9), found in Dictyostelium citrinum (Slime mold).